The primary structure comprises 309 residues: tRNA-dihydrouridine(16) synthase (309 aa).

FMN contacts are provided by residues 7 to 9 (PME) and glutamine 68. Cysteine 98 serves as the catalytic Proton donor. FMN is bound by residues arginine 137, asparagine 198, and 220-221 (GC).

Belongs to the Dus family. DusC subfamily. It depends on FMN as a cofactor.

The enzyme catalyses 5,6-dihydrouridine(16) in tRNA + NADP(+) = uridine(16) in tRNA + NADPH + H(+). It carries out the reaction 5,6-dihydrouridine(16) in tRNA + NAD(+) = uridine(16) in tRNA + NADH + H(+). Its function is as follows. Catalyzes the synthesis of 5,6-dihydrouridine (D), a modified base found in the D-loop of most tRNAs, via the reduction of the C5-C6 double bond in target uridines. Specifically modifies U16 in tRNAs. This is tRNA-dihydrouridine(16) synthase from Azotobacter vinelandii.